The sequence spans 475 residues: tRNA-2-methylthio-N(6)-dimethylallyladenosine synthase (475 aa).

The MTTase N-terminal domain occupies 2-119 (AKLHITTWGC…LPEMINKIRG (118 aa)). [4Fe-4S] cluster contacts are provided by cysteine 11, cysteine 48, cysteine 82, cysteine 156, cysteine 160, and cysteine 163. The 233-residue stretch at 142-374 (RAEGPTAFVS…QQRINHQAMQ (233 aa)) folds into the Radical SAM core domain. The 64-residue stretch at 377–440 (RAMLGTEQRV…TNSLRGDVVR (64 aa)) folds into the TRAM domain.

This sequence belongs to the methylthiotransferase family. MiaB subfamily. As to quaternary structure, monomer. The cofactor is [4Fe-4S] cluster.

It localises to the cytoplasm. The catalysed reaction is N(6)-dimethylallyladenosine(37) in tRNA + (sulfur carrier)-SH + AH2 + 2 S-adenosyl-L-methionine = 2-methylsulfanyl-N(6)-dimethylallyladenosine(37) in tRNA + (sulfur carrier)-H + 5'-deoxyadenosine + L-methionine + A + S-adenosyl-L-homocysteine + 2 H(+). Its function is as follows. Catalyzes the methylthiolation of N6-(dimethylallyl)adenosine (i(6)A), leading to the formation of 2-methylthio-N6-(dimethylallyl)adenosine (ms(2)i(6)A) at position 37 in tRNAs that read codons beginning with uridine. The protein is tRNA-2-methylthio-N(6)-dimethylallyladenosine synthase of Actinobacillus pleuropneumoniae serotype 5b (strain L20).